A 337-amino-acid polypeptide reads, in one-letter code: RNA 3'-terminal phosphate cyclase (337 aa).

ATP-binding positions include glutamine 100 and 281-285; that span reads YMGDQ. Histidine 306 serves as the catalytic Tele-AMP-histidine intermediate.

The protein belongs to the RNA 3'-terminal cyclase family. Type 1 subfamily.

The protein resides in the cytoplasm. The enzyme catalyses a 3'-end 3'-phospho-ribonucleotide-RNA + ATP = a 3'-end 2',3'-cyclophospho-ribonucleotide-RNA + AMP + diphosphate. Functionally, catalyzes the conversion of 3'-phosphate to a 2',3'-cyclic phosphodiester at the end of RNA. The mechanism of action of the enzyme occurs in 3 steps: (A) adenylation of the enzyme by ATP; (B) transfer of adenylate to an RNA-N3'P to produce RNA-N3'PP5'A; (C) and attack of the adjacent 2'-hydroxyl on the 3'-phosphorus in the diester linkage to produce the cyclic end product. The biological role of this enzyme is unknown but it is likely to function in some aspects of cellular RNA processing. The protein is RNA 3'-terminal phosphate cyclase (rtcA) of Methanothermobacter thermautotrophicus (strain ATCC 29096 / DSM 1053 / JCM 10044 / NBRC 100330 / Delta H) (Methanobacterium thermoautotrophicum).